The sequence spans 468 residues: Phosphoglucosamine mutase (468 aa).

S112 functions as the Phosphoserine intermediate in the catalytic mechanism. The Mg(2+) site is built by S112, D254, D256, and D258. The residue at position 112 (S112) is a Phosphoserine.

It belongs to the phosphohexose mutase family. Mg(2+) serves as cofactor. In terms of processing, activated by phosphorylation.

It catalyses the reaction alpha-D-glucosamine 1-phosphate = D-glucosamine 6-phosphate. Functionally, catalyzes the conversion of glucosamine-6-phosphate to glucosamine-1-phosphate. In Prochlorococcus marinus (strain MIT 9313), this protein is Phosphoglucosamine mutase.